The primary structure comprises 427 residues: Retron Mx65 reverse transcriptase (427 aa).

A Reverse transcriptase domain is found at R136 to V366. Mg(2+) contacts are provided by D219, D315, and D316.

It belongs to the bacterial reverse transcriptase family.

The catalysed reaction is DNA(n) + a 2'-deoxyribonucleoside 5'-triphosphate = DNA(n+1) + diphosphate. Reverse transcriptase (RT) responsible for synthesis of msDNA-Mx65 (a branched molecule with RNA linked by a 2',5'-phosphodiester bond to ssDNA). The retron transcript serves as primer (from a conserved internal G residue) and template for the reaction, and codes for the RT. The retron is involved in antiviral defense. In Myxococcus xanthus, this protein is Retron Mx65 reverse transcriptase.